We begin with the raw amino-acid sequence, 949 residues long: Piwi-like protein 2 (949 aa).

Residues 1–125 (MDPTRPPFRG…SLSTRVQQAS (125 aa)) are disordered. The span at 115-125 (PSLSTRVQQAS) shows a compositional bias: polar residues. In terms of domain architecture, PAZ spans 366-478 (SVLDIMNILY…LLPELAFMTG (113 aa)). Residues 644-935 (LLVCLISGTR…LAFLSGQFLH (292 aa)) enclose the Piwi domain. Residues Asp721, Glu759, Asp791, and His924 contribute to the active site.

Belongs to the argonaute family. Piwi subfamily. As to quaternary structure, component of the PET complex. It depends on Mg(2+) as a cofactor. Post-translationally, methylated on arginine residues; required for the interaction with Tudor domain-containing protein and subsequent localization to the meiotic nuage, also named P granule. As to expression, expressed in oocytes, testis and liver (at protein level).

The protein localises to the cytoplasm. The protein resides in the nucleus. Endoribonuclease that plays a central role during spermatogenesis by repressing transposable elements and preventing their mobilization, which is essential for the germline integrity. Plays an essential role in meiotic differentiation of spermatocytes, germ cell differentiation and in self-renewal of spermatogonial stem cells. Acts via the piRNA metabolic process, which mediates the repression of transposable elements during meiosis by forming complexes composed of piRNAs and Piwi proteins and govern the methylation and subsequent repression of transposons. During piRNA biosynthesis, plays a key role in the piRNA amplification loop, also named ping-pong amplification cycle, by acting as a 'slicer-competent' piRNA endoribonuclease that cleaves primary piRNAs, which are then loaded onto 'slicer-incompetent' piwil4. Piwil2 slicing produces a pre-miRNA intermediate, which is then processed in mature piRNAs, and as well as a 16 nucleotide by-product that is degraded. Required for piwil4/miwi2 nuclear localization and association with secondary piRNAs antisense. Represses circadian rhythms by promoting the stability and activity of core clock components BMAL1 and CLOCK. The chain is Piwi-like protein 2 (piwil2) from Xenopus tropicalis (Western clawed frog).